The primary structure comprises 94 residues: RNA-binding protein Hfq (94 aa).

Residues 9–68 (DPFLNALRRERVPVSIYLVNGIKLQGQVESFDQFVILLKNTVSQMVYKHAISTVVPARPF) form the Sm domain. Residues 70 to 94 (VSAHHSSPAPTPAGGFNGQNDETSE) form a disordered region.

This sequence belongs to the Hfq family. Homohexamer.

Its function is as follows. RNA chaperone that binds small regulatory RNA (sRNAs) and mRNAs to facilitate mRNA translational regulation in response to envelope stress, environmental stress and changes in metabolite concentrations. Also binds with high specificity to tRNAs. In Shewanella woodyi (strain ATCC 51908 / MS32), this protein is RNA-binding protein Hfq.